The chain runs to 302 residues: MSVPDATVVKAFLLDLQNRICAGLEQLDGQASFAADSWTRTEGGGGTSRVLTQGAVFEQAGVNFSHVTGAAMPASATAHRPELAGRSFEAMGVSLVIHPKNPYIPTTHANVRFFIAHKDGADPVWWFGGGFDLTPYYPFEEDVREWHQTAKNLCLPFGDDVYPKYKKWCDEYFFLPHRNETRGVGGLFFDDLNQAGFDKSFDFMQAVGNGFLTAYAPIVERRKETPYGERERDFQLYRRGRYVEFNLVYDRGTLFGLQTGGRTESILMSMPPLVRWQYAYTPEAGSPEAELYDNYLKPRDWV.

Ser94 is a substrate binding site. His98 and His108 together coordinate a divalent metal cation. The Proton donor role is filled by His108. Substrate is bound at residue 110-112; it reads NVR. His147 and His177 together coordinate a divalent metal cation. Residues 242-277 are important for dimerization; that stretch reads YVEFNLVYDRGTLFGLQTGGRTESILMSMPPLVRWQ. Substrate is bound at residue 260–262; it reads GGR.

Belongs to the aerobic coproporphyrinogen-III oxidase family. As to quaternary structure, homodimer. The cofactor is a divalent metal cation.

It is found in the cytoplasm. The enzyme catalyses coproporphyrinogen III + O2 + 2 H(+) = protoporphyrinogen IX + 2 CO2 + 2 H2O. Its pathway is porphyrin-containing compound metabolism; protoporphyrin-IX biosynthesis; protoporphyrinogen-IX from coproporphyrinogen-III (O2 route): step 1/1. Functionally, involved in the heme biosynthesis. Catalyzes the aerobic oxidative decarboxylation of propionate groups of rings A and B of coproporphyrinogen-III to yield the vinyl groups in protoporphyrinogen-IX. The sequence is that of Oxygen-dependent coproporphyrinogen-III oxidase from Shewanella sp. (strain ANA-3).